The chain runs to 491 residues: (1S)-1-hydroxy-luvungin A synthase CYP88A37 (491 aa).

Residues 5-25 (FSWLILALAIFIGTYAFVFGV) traverse the membrane as a helical segment. Position 439 (C439) interacts with heme.

The protein belongs to the cytochrome P450 family. The cofactor is heme. In terms of tissue distribution, expressed in maturing fruits and in juice vesicles.

Its subcellular location is the membrane. The catalysed reaction is luvungin A + reduced [NADPH--hemoprotein reductase] + O2 = (1S)-1-hydroxy-luvungin A + oxidized [NADPH--hemoprotein reductase] + H2O + H(+). It participates in secondary metabolite biosynthesis; terpenoid biosynthesis. Monooxygenase involved in the biosynthesis of limonoids triterpene natural products such as limonin, a compound with insecticidal activity responsible for the bitter taste in citrus. Catalyzes the conversion of luvungin A to (1S)-1-hydroxy-luvungin A. This Citrus sinensis (Sweet orange) protein is (1S)-1-hydroxy-luvungin A synthase CYP88A37.